Here is a 236-residue protein sequence, read N- to C-terminus: Small ribosomal subunit protein uS2c (236 aa).

The protein belongs to the universal ribosomal protein uS2 family.

The protein resides in the plastid. The protein localises to the chloroplast. The protein is Small ribosomal subunit protein uS2c (rps2) of Gossypium barbadense (Sea Island cotton).